The primary structure comprises 652 residues: Aorsin (652 aa).

An N-terminal signal peptide occupies residues 1-22; sequence MRPLSHLSFFNGLLLGLSALSA. Positions 23–215 are cleaved as a propeptide — removed in mature form; that stretch reads ATSVVHERRE…PRPIQQHDVK (193 aa). N112 carries N-linked (GlcNAc...) asparagine glycosylation. A disordered region spans residues 177 to 211; it reads VNLNPSSGKPSSIRRRAAASKKTKLPARGPRPIQQ. The segment covering 188-201 has biased composition (basic residues); it reads SIRRRAAASKKTKL. Residues N218 and N247 are each glycosylated (N-linked (GlcNAc...) asparagine). Positions 225–651 constitute a Peptidase S53 domain; it reads LITPECIRAL…PKMLKLWLDL (427 aa). Active-site charge relay system residues include E301 and D305. Residues N331 and N445 are each glycosylated (N-linked (GlcNAc...) asparagine). S569 functions as the Charge relay system in the catalytic mechanism. 2 residues coordinate Ca(2+): D610 and I611. A glycan (N-linked (GlcNAc...) asparagine) is linked at N613. 2 residues coordinate Ca(2+): G629 and D631.

Ca(2+) is required as a cofactor. In terms of processing, N-glycosylated. O-glycosylated.

The protein resides in the secreted. The protein localises to the extracellular space. Its activity is regulated as follows. Inhibited by antipain and leupeptin. Serine endopeptidase which hydrolyzes a range of fluorogenic peptide substrates containing the basic residues arginine or lysine at the P1 position and prefers paired basic resides. Also hydrolyzes clupeine and salmine, activates plasminogen and converts trypsinogen to trypsin. The sequence is that of Aorsin from Aspergillus oryzae (strain ATCC 42149 / RIB 40) (Yellow koji mold).